The sequence spans 373 residues: Chorismate synthase (373 aa).

Arg-46 contacts NADP(+). FMN-binding positions include Arg-123 to Ser-125, Asn-250 to Ala-251, Gly-295, Lys-310 to Ser-314, and Arg-337.

This sequence belongs to the chorismate synthase family. It depends on FMNH2 as a cofactor.

It catalyses the reaction 5-O-(1-carboxyvinyl)-3-phosphoshikimate = chorismate + phosphate. The protein operates within metabolic intermediate biosynthesis; chorismate biosynthesis; chorismate from D-erythrose 4-phosphate and phosphoenolpyruvate: step 7/7. Catalyzes the anti-1,4-elimination of the C-3 phosphate and the C-6 proR hydrogen from 5-enolpyruvylshikimate-3-phosphate (EPSP) to yield chorismate, which is the branch point compound that serves as the starting substrate for the three terminal pathways of aromatic amino acid biosynthesis. This reaction introduces a second double bond into the aromatic ring system. In Methanococcus aeolicus (strain ATCC BAA-1280 / DSM 17508 / OCM 812 / Nankai-3), this protein is Chorismate synthase.